The chain runs to 314 residues: Regulator of microtubule dynamics protein 1 (314 aa).

Lys-165 carries the post-translational modification N6-succinyllysine. TPR repeat units follow at residues Ala-168–Asp-204 and Pro-222–Phe-258.

It belongs to the RMDN family. In terms of assembly, interacts with microtubules.

Its subcellular location is the cytoplasm. It localises to the cytoskeleton. The protein resides in the spindle. It is found in the spindle pole. This chain is Regulator of microtubule dynamics protein 1 (RMDN1), found in Homo sapiens (Human).